The primary structure comprises 734 residues: Mechanosensitive ion channel protein 10 (734 aa).

2 disordered regions span residues 1 to 75 (MAEQ…LTQR) and 115 to 136 (SFSR…APVT). Over residues 24-39 (EASRRSKEMASPESEK) the composition is skewed to basic and acidic residues. Phosphoserine is present on S34. Polar residues-rich tracts occupy residues 65–75 (PNQNNVGLTQR) and 117–129 (SRAS…NRSV). Phosphoserine occurs at positions 128 and 131. 6 consecutive transmembrane segments (helical) span residues 164–184 (ISTL…ALVA), 196–216 (FWGL…SGML), 249–269 (SVQV…LFNH), 288–308 (LISI…LKIL), 516–536 (LVTA…LEVA), and 551–571 (LAFI…FVFV).

It belongs to the MscS (TC 1.A.23) family. Detected in the root tip and throughout the vasculature of the root and leaf.

The protein resides in the cell membrane. Functionally, mechanosensitive channel that opens in response to stretch forces in the membrane lipid bilayer. This is Mechanosensitive ion channel protein 10 (MSL10) from Arabidopsis thaliana (Mouse-ear cress).